The following is a 338-amino-acid chain: D-xylulose reductase (338 aa).

Zn(2+)-binding residues include cysteine 40, histidine 65, and glutamate 151.

Belongs to the zinc-containing alcohol dehydrogenase family. In terms of assembly, homotetramer. The cofactor is Zn(2+).

The enzyme catalyses xylitol + NAD(+) = D-xylulose + NADH + H(+). The polypeptide is D-xylulose reductase (Morganella morganii (Proteus morganii)).